Reading from the N-terminus, the 146-residue chain is Globin (146 aa).

The residue at position 1 (Ser1) is an N-acetylserine. Residues 1–146 (SLSGAEADLL…IIDALKKAGK (146 aa)) form the Globin domain. A heme b-binding site is contributed by His95.

It belongs to the globin family. In terms of assembly, monomer.

The protein is Globin of Bursatella leachii (Ragged sea hare).